The sequence spans 334 residues: Chitinase 9 (334 aa).

A signal peptide spans 1–23 (MKATTTAVALLVAAAAMAAQVVA). The region spanning 24-64 (EQCGSQAGGALCPNCLCCSSYGWCGSTSDYCGDGCQSQCDG) is the Chitin-binding type-1 domain. 8 disulfides stabilise this stretch: Cys26-Cys41, Cys35-Cys47, Cys38-Cys65, Cys40-Cys54, Cys58-Cys62, Cys107-Cys169, Cys181-Cys189, and Cys288-Cys320. Glu151 (proton donor) is an active-site residue.

Belongs to the glycosyl hydrolase 19 family. Chitinase class I subfamily. Expressed at high levels in roots, sheaths and meristems.

It catalyses the reaction Random endo-hydrolysis of N-acetyl-beta-D-glucosaminide (1-&gt;4)-beta-linkages in chitin and chitodextrins.. In terms of biological role, may play a role in defense against fungal pathogens containing chitin. This chain is Chitinase 9 (Cht9), found in Oryza sativa subsp. japonica (Rice).